We begin with the raw amino-acid sequence, 632 residues long: Mitoguardin 1 (632 aa).

The helical transmembrane segment at Pro-70–Ala-90 threads the bilayer. Residues Ser-289 and Ser-293 each carry the phosphoserine modification.

Belongs to the mitoguardin family. As to quaternary structure, homodimer and heterodimer; forms heterodimers with MIGA2. Interacts with PLD6/MitoPLD.

Its subcellular location is the mitochondrion outer membrane. Functionally, regulator of mitochondrial fusion: acts by forming homo- and heterodimers at the mitochondrial outer membrane and facilitating the formation of PLD6/MitoPLD dimers. May act by regulating phospholipid metabolism via PLD6/MitoPLD. This Homo sapiens (Human) protein is Mitoguardin 1.